A 204-amino-acid polypeptide reads, in one-letter code: Protein Mis18-alpha (204 aa).

Serine 13, serine 16, and serine 17 each carry phosphoserine. The Mis18 domain maps to 51-149 (PLVFLCARCR…SVEAVESYTL (99 aa)). Residues cysteine 56, cysteine 59, cysteine 112, and cysteine 115 each coordinate Zn(2+). A Glycyl lysine isopeptide (Lys-Gly) (interchain with G-Cter in SUMO2) cross-link involves residue lysine 133. Serine 204 carries the phosphoserine modification.

The protein belongs to the mis18 family. As to quaternary structure, homodimer, and heterodimer with OIP5/MIS18B. Identified in a complex containing MIS18A, OIP5/MIS18B, MIS18BP1, RBBP7 and RBBP4.

It localises to the nucleus. The protein resides in the chromosome. Its subcellular location is the centromere. Its function is as follows. Required for recruitment of CENPA to centromeres and normal chromosome segregation during mitosis. The polypeptide is Protein Mis18-alpha (Mis18a) (Mus musculus (Mouse)).